Consider the following 1215-residue polypeptide: MPGLLNCLTGAALPLMESDVTSYVSGYALGLTASLTYGNLEAQPFQGLFVYPIDEYSTVVGFEAVIADRVVTIQLRDKAKLDRSHLDIQPATVTGNFPEEESPIAPGKVTLDEDLERVLFVVNLGTIAPMENVTVFISTSSELPTLPSGAVRVLLPAICAPTVPPSCTHRFGSSSPQPQGKDPHCFGTQTKDSYNRLCLATLLDTKVTNPMEYEFKFQLEIRGPCLLAGVESPTHEIRADAAPSAHSAKSIIITLAKKHTFDRPVEILLHPSEPHMPHVLVEKGDMTLGEYDQHLKGKADFIRGTKKDNSAERKTEVIRKRLHKDIPHHSVIMLNFCPDLQSVQPNPRKAHGEFIFLIDRSNSMSKTNIQCIKEAMLVALKSLMPACFFNIIGFGSTFKAVFASSRIYNEENLTMACDCIQRMQADMGGTNMLSPLKWVLRQPLRRGHPRLLFLITDGSVNNTGKVLELVRNHASSTRCYSFGIGPTVCYRLVKGLASVSKGSAEFLMEGERLQPKMVKSLKKAMAPVLSDVTVEWVFPETTEALISPVSTSSLFPGERLMGYGIVCDASLYISNSRSDKRRKYGMLHTQESSSSVFYPSQDEGLSPGSGNCAKNVNQGQTKDAHPCNGDSPTHHGLDVSRRRRAYSTNQISSHKTCPRATTASDPTGTARRYPLRKAKVQDLASESDWESQKWQTDLQTLLNEGHNLSQGPKLHGPGARRPSLLPQGCQLMRFFDQKPQAWGPVRELDCGASRTSAPNSQSSEDLAIEPAHCPSTFERETSLDLEPMAESEEQANPCRTATPSPVVGKALVKGLCANQRMQWEVSFELEPPALKRGDTQNADMWSETFHHLAARAIIREFEHLAEREDEIELGSNRRYQVNAVHTSKACSVISKYTAFVPVDINKRQYLPTVVKYPNSGAMLSFRNLTRQWGGSSAGLGRPQSMLREHSSAAGDSKFQTLALQDSPTSTFNKTPSPGHEKQTTAEGPPQNLSASAPSSMKATETLFGSKLNLNKSRLLTRATKGFLSKSLPKASEATPGSQSSDYIPLVSLQLASGAFLLNEAFCTTIQIPMEKLKWTSPFSCLRMSLVTRRQDLKTQSPQDCTSLSSSPPSCDGISLKSEESSDQESNAMLEHMGKLWATVVALAWLEHSSANYIIEWELVAAKASSWVEKQKVPEGRTLSTLKNTARQLFVLLRHWDEKLEFNMLCYNPNYV.

Positions 1-18 (MPGLLNCLTGAALPLMES) are cleaved as a signal peptide. The VIT domain maps to 19 to 141 (DVTSYVSGYA…NVTVFISTSS (123 aa)). An N-linked (GlcNAc...) asparagine glycan is attached at Asn132. Residues 353–532 (EFIFLIDRSN…KAMAPVLSDV (180 aa)) form the VWFA domain. The segment at 595–674 (SVFYPSQDEG…DPTGTARRYP (80 aa)) is disordered. Polar residues-rich tracts occupy residues 608–621 (GSGNCAKNVNQGQT) and 646–667 (YSTNQISSHKTCPRATTASDPT). At Tyr879 the chain carries Phosphotyrosine. Disordered regions lie at residues 934–953 (GSSAGLGRPQSMLREHSSAA), 964–999 (QDSPTSTFNKTPSPGHEKQTTAEGPPQNLSASAPSS), and 1100–1121 (SPQDCTSLSSSPPSCDGISLKS). Composition is skewed to polar residues over residues 964-975 (QDSPTSTFNKTP), 990-999 (QNLSASAPSS), and 1100-1112 (SPQDCTSLSSSPP).

It localises to the secreted. This is von Willebrand factor A domain-containing protein 5B1 (Vwa5b1) from Mus musculus (Mouse).